An 83-amino-acid polypeptide reads, in one-letter code: Small ribosomal subunit protein bS16 (83 aa).

Belongs to the bacterial ribosomal protein bS16 family.

This is Small ribosomal subunit protein bS16 from Pseudomonas fluorescens (strain SBW25).